A 268-amino-acid chain; its full sequence is Octanoyltransferase (268 aa).

In terms of domain architecture, BPL/LPL catalytic spans 47-243; the sequence is PETPDQVWLV…ALCEVLAAHE (197 aa). Substrate is bound by residues 87-94, 159-161, and 172-174; these read RGGQITYH, ALG, and GVS. Catalysis depends on cysteine 190, which acts as the Acyl-thioester intermediate.

It belongs to the LipB family.

The protein resides in the cytoplasm. It catalyses the reaction octanoyl-[ACP] + L-lysyl-[protein] = N(6)-octanoyl-L-lysyl-[protein] + holo-[ACP] + H(+). It participates in protein modification; protein lipoylation via endogenous pathway; protein N(6)-(lipoyl)lysine from octanoyl-[acyl-carrier-protein]: step 1/2. Functionally, catalyzes the transfer of endogenously produced octanoic acid from octanoyl-acyl-carrier-protein onto the lipoyl domains of lipoate-dependent enzymes. Lipoyl-ACP can also act as a substrate although octanoyl-ACP is likely to be the physiological substrate. In Cupriavidus necator (strain ATCC 17699 / DSM 428 / KCTC 22496 / NCIMB 10442 / H16 / Stanier 337) (Ralstonia eutropha), this protein is Octanoyltransferase.